The following is a 185-amino-acid chain: MINEIKTDAKDRMTKSVDSLKSHMSKIRTGRAQPALLDGIMVEYYGSATPLRQVANVVAEDSRTLAVSVFDRSMIQAVEKAIMTSDLGLNPSSAGTTIRVPLPALTEERRKDLIKLVRAEAEQARVSVRNVRRDCNADLKALLKDKDISEDDDRRAQEEIQKLTDSFVKLVDDLLAAKEKELMEI.

Belongs to the RRF family.

Its subcellular location is the cytoplasm. Responsible for the release of ribosomes from messenger RNA at the termination of protein biosynthesis. May increase the efficiency of translation by recycling ribosomes from one round of translation to another. This Tolumonas auensis (strain DSM 9187 / NBRC 110442 / TA 4) protein is Ribosome-recycling factor.